Reading from the N-terminus, the 414-residue chain is Glutamyl-tRNA reductase (414 aa).

Substrate contacts are provided by residues 49 to 52 (TCNR), S108, 113 to 115 (EPQ), and Q119. C50 acts as the Nucleophile in catalysis. 188-193 (GAGQTG) contributes to the NADP(+) binding site.

It belongs to the glutamyl-tRNA reductase family. In terms of assembly, homodimer.

The catalysed reaction is (S)-4-amino-5-oxopentanoate + tRNA(Glu) + NADP(+) = L-glutamyl-tRNA(Glu) + NADPH + H(+). It participates in porphyrin-containing compound metabolism; protoporphyrin-IX biosynthesis; 5-aminolevulinate from L-glutamyl-tRNA(Glu): step 1/2. Its function is as follows. Catalyzes the NADPH-dependent reduction of glutamyl-tRNA(Glu) to glutamate 1-semialdehyde (GSA). The chain is Glutamyl-tRNA reductase from Francisella tularensis subsp. holarctica (strain LVS).